Reading from the N-terminus, the 256-residue chain is MKFIVIKIGGSTLSDMHPSIINNIKHLRSNNIYPIIVHGGGPFINEALSNQQIEPHFVNGLRVTDKATMTITKHTLIADVNTALVAQFNQQQCSAIGLCGLDAQLFEIKRFDQQYGYVGVPTTLNIDSLSYLCTKFVPIINSIGFNNHDGEFYNINADTLAYFIAASLEAPIYVLSNIAGVLINDVVIPQLPLADINQYIEHGDIYGGMIPKVLDAKNAIKNGCPKVIIASGNKPNIIEAIYNNDFVGTTILKSSV.

Substrate is bound by residues 40–41, Arg62, and Asn154; that span reads GG.

The protein belongs to the acetylglutamate kinase family. ArgB subfamily.

It localises to the cytoplasm. It carries out the reaction N-acetyl-L-glutamate + ATP = N-acetyl-L-glutamyl 5-phosphate + ADP. The protein operates within amino-acid biosynthesis; L-arginine biosynthesis; N(2)-acetyl-L-ornithine from L-glutamate: step 2/4. Catalyzes the ATP-dependent phosphorylation of N-acetyl-L-glutamate. The sequence is that of Acetylglutamate kinase from Staphylococcus aureus (strain MRSA252).